Consider the following 184-residue polypeptide: Coordinator of PRMT5 and differentiation stimulator (184 aa).

Methionine 1 is subject to N-acetylmethionine. Residues 1 to 14 (MDLQAAGAQAQGAA) are compositionally biased toward low complexity. Residues 1–136 (MDLQAAGAQA…PYDADDIQES (136 aa)) form a disordered region. Residues 42-56 (SSQERETEKAMDRLA) are compositionally biased toward basic and acidic residues. Residues serine 66 and serine 75 each carry the phosphoserine modification. Acidic residues predominate over residues 78-89 (EGFAMDEEDSDG).

As to quaternary structure, interacts with PRMT5. Interacts with histone H4; specifically interacts with the N-terminus of histone H4 but not with histone H3. Interacts with CBFB. Found in a complex with PRMT5, RUNX1 and CBFB.

The protein resides in the nucleus. Its function is as follows. Histone-binding protein required for histone H4 methyltransferase activity of PRMT5. Specifically required for histone H4 'Arg-3' methylation mediated by PRMT5, but not histone H3 'Arg-8' methylation, suggesting that it modulates the substrate specificity of PRMT5. Specifically interacts with the N-terminus of histone H4 but not with histone H3, suggesting that it acts by promoting the association between histone H4 and PRMT5. Involved in CCNE1 promoter repression. Plays a role in muscle cell differentiation by modulating the recruitment of PRMT5 to the promoter of genes involved in the coordination between cell cycle exit and muscle differentiation. This Homo sapiens (Human) protein is Coordinator of PRMT5 and differentiation stimulator (COPRS).